Consider the following 240-residue polypeptide: Probable hydroxyacylglutathione hydrolase (240 aa).

Residues His-33, His-35, Asp-37, His-38, His-95, and Asp-119 each contribute to the Zn(2+) site. Substrate is bound by residues Arg-128, His-158 to Tyr-160, and Arg-234 to Lys-237. His-158 lines the Zn(2+) pocket.

This sequence belongs to the metallo-beta-lactamase superfamily. Glyoxalase II family. Requires Zn(2+) as cofactor.

The enzyme catalyses an S-(2-hydroxyacyl)glutathione + H2O = a 2-hydroxy carboxylate + glutathione + H(+). Its pathway is secondary metabolite metabolism; methylglyoxal degradation; (R)-lactate from methylglyoxal: step 2/2. Thiolesterase that catalyzes the hydrolysis of S-D-lactoyl-glutathione to form glutathione and D-lactic acid. The polypeptide is Probable hydroxyacylglutathione hydrolase (Schistosoma mansoni (Blood fluke)).